The sequence spans 473 residues: MAAPVMTVSDSKDLRGLNLIAAHSHIRGLGVDATTLEPRASSQGLVGQEKARKAAAVMLQMIKEGKIAGRAVLIAGPPSTGKTAIAMGMAQSLGPDVPFTTLASSEIFSLEMSKTEALTQAFRKSIGVRIKEESEIMEGEVVEIQIDRSVTGSAKQGKLTIKTTDMEAVYDMGSKMIDAMTKERVMAGDIISIDKSSGKITKLGRSYARSRDYDAMGVDTKFLQCPDGELQKRKEVVHTVTLHEIDVINSRTQGFLALFSGDTGEIRSEIRDQINTKVGEWKEEGKAEIVPGVLFIDEVHMLDIECFSYINRALEDDLAPVVIMASNRGNSRIRGTDYRSPHGLPLDFLDRVAIINTHSYTPEEIKQIISIRAQEEEVDVHPDALALLTKIGQEAGLRYASNLITTSQLVSAKRKAKQVEVSDVQRSFQLFYDPARSIKFVAESEKRLIGNTGAVDFSVGAAVSNGEEKMDLS.

Residue 76-83 participates in ATP binding; the sequence is GPPSTGKT.

This sequence belongs to the RuvB family. May form heterododecamers with RVB1. Component of the SWR1 chromatin remodeling complex, the INO80 chromatin remodeling complex, and of the R2TP complex.

It is found in the nucleus. It catalyses the reaction ATP + H2O = ADP + phosphate + H(+). Its function is as follows. DNA helicase which participates in several chromatin remodeling complexes, including the SWR1 and the INO80 complexes. The SWR1 complex mediates the ATP-dependent exchange of histone H2A for the H2A variant HZT1 leading to transcriptional regulation of selected genes by chromatin remodeling. The INO80 complex remodels chromatin by shifting nucleosomes and is involved in DNA repair. Also involved in pre-rRNA processing. In Gibberella zeae (strain ATCC MYA-4620 / CBS 123657 / FGSC 9075 / NRRL 31084 / PH-1) (Wheat head blight fungus), this protein is RuvB-like helicase 2 (RVB2).